Here is a 474-residue protein sequence, read N- to C-terminus: MNFWLQEQAQSNGNRLAIVTNQLSLTYEELYHRAKTIAEYLTSLNQKRIGLYISNDIDSVVLIHACWLAHIEIAMINTRLTRHEMINQMNSVDIATIVHTLPLELEGFNLYHFNDLTQLDKHDVSGYKFNLESIASIMFTSGTTGPQKAVPQTFNNHLASAKGCKQSLGFEQNTVWLSVLPIYHISGLSVILRAVIEGFTVRLVKKFQTDDMLTQIKTYPITHMSLVPQTLKWLMDAGLTQPFSLEKILLGGAKLSPQLIEQALTYRLPVYNSFGMTETCSQFLTASPQMLKERFDTVGKPSENVEVKIKNPNAYGHGELLIKGENVMNGYLYPKYLKDTFDNDGYFQTGDIAEIDDEGYVIIYDRRKDLIISGGENIYPYQIETIAKDFEGIEDAVCVGISDDTWGQVPILYYVTNQDINQTELIEHFENHLARYKIPKKYYQVKSLPYTSTGKLQRKKVKSEDLNEGKNNES.

The protein belongs to the ATP-dependent AMP-binding enzyme family. MenE subfamily.

The enzyme catalyses 2-succinylbenzoate + ATP + CoA = 2-succinylbenzoyl-CoA + AMP + diphosphate. Its pathway is quinol/quinone metabolism; 1,4-dihydroxy-2-naphthoate biosynthesis; 1,4-dihydroxy-2-naphthoate from chorismate: step 5/7. It participates in quinol/quinone metabolism; menaquinone biosynthesis. Converts 2-succinylbenzoate (OSB) to 2-succinylbenzoyl-CoA (OSB-CoA). In Staphylococcus epidermidis (strain ATCC 35984 / DSM 28319 / BCRC 17069 / CCUG 31568 / BM 3577 / RP62A), this protein is 2-succinylbenzoate--CoA ligase.